The primary structure comprises 100 residues: DNA-binding protein HU (100 aa).

It belongs to the bacterial histone-like protein family.

Its function is as follows. Histone-like DNA-binding protein which is capable of wrapping DNA to stabilize it, and thus to prevent its denaturation under extreme environmental conditions. The sequence is that of DNA-binding protein HU (hup) from Synechocystis sp. (strain ATCC 27184 / PCC 6803 / Kazusa).